Reading from the N-terminus, the 263-residue chain is Lens fiber major intrinsic protein (263 aa).

The Cytoplasmic segment spans residues 1-9 (MWEFRSFSF). A helical transmembrane segment spans residues 10-29 (WRAVFAEFFGTMFYVFFGLG). Residues 30–41 (ASLKWAAGPANV) are Extracellular-facing. A helical membrane pass occupies residues 42-59 (LVIALAFGLVLATMVQSI). Over 60–61 (GH) the chain is Cytoplasmic. Positions 62-77 (VSGAHINPAVTFAFLI) form an intramembrane region, discontinuously helical. Residues 68–70 (NPA) carry the NPA 1 motif. Over 78 to 82 (GSQMS) the chain is Cytoplasmic. The chain crosses the membrane as a helical span at residues 83–106 (LFRAIFYIAAQLLGAVAGAAVLYG). At 107 to 127 (VTPAAIRGNLALNTLHPGVSL) the chain is on the extracellular side. Residues 128-148 (GQATTVEIFLTLQFVLCIFAT) form a helical membrane-spanning segment. The Cytoplasmic segment spans residues 149-156 (YDERRNGR). The chain crosses the membrane as a helical span at residues 157 to 175 (LGSVSLAIGFSLTLGHLFG). Topologically, residues 176–178 (LYY) are extracellular. An intramembrane region (discontinuously helical) is located at residues 179–193 (TGASMNPARSFAPAV). The NPA 2 motif lies at 184-186 (NPA). Topologically, residues 194 to 200 (LTRNFTN) are extracellular. Residues 201-222 (HWVYWVGPIIGGALGGLVYDFI) form a helical membrane-spanning segment. Topologically, residues 223 to 263 (LFPRMRGLSERLSILKGARPAEPEGQQEATGEPIELKTQSL) are cytoplasmic. An interaction with CALM region spans residues 227-237 (MRGLSERLSIL). The segment at 241–263 (RPAEPEGQQEATGEPIELKTQSL) is disordered.

It belongs to the MIP/aquaporin (TC 1.A.8) family. Homotetramer; each monomer provides an independent water pore. Two homotetramers on opposing membranes can dimerize, forming a cell-cell junction. Interacts with CALM; the calcium-calmodulin/CALM complex interacts with the cytoplasmic domains of two aquaporins, leading to channel closure.

It is found in the cell membrane. The protein resides in the cell junction. It carries out the reaction H2O(in) = H2O(out). Its activity is regulated as follows. The water channel activity is inhibited by calcium through calmodulin/CALM. Its function is as follows. Aquaporins form homotetrameric transmembrane channels, with each monomer independently mediating water transport across the plasma membrane along its osmotic gradient. Specifically expressed in lens fiber cells, this aquaporin is crucial for maintaining lens water homeostasis and transparency. Beyond water permeability, it also acts as a cell-to-cell adhesion molecule, forming thin junctions between lens fiber cells that are essential for maintaining the ordered structure and transparency of the lens. The protein is Lens fiber major intrinsic protein of Lithobates pipiens (Northern leopard frog).